The sequence spans 245 residues: Pyridoxine 5'-phosphate synthase (245 aa).

Residues Asn-8 and Arg-19 each contribute to the 3-amino-2-oxopropyl phosphate site. His-44 functions as the Proton acceptor in the catalytic mechanism. Residues Arg-46 and His-51 each contribute to the 1-deoxy-D-xylulose 5-phosphate site. Catalysis depends on Glu-76, which acts as the Proton acceptor. Thr-106 contacts 1-deoxy-D-xylulose 5-phosphate. The active-site Proton donor is His-198. 3-amino-2-oxopropyl phosphate contacts are provided by residues Asp-199 and 221 to 222; that span reads GH.

This sequence belongs to the PNP synthase family. In terms of assembly, homooctamer; tetramer of dimers.

It is found in the cytoplasm. It catalyses the reaction 3-amino-2-oxopropyl phosphate + 1-deoxy-D-xylulose 5-phosphate = pyridoxine 5'-phosphate + phosphate + 2 H2O + H(+). Its pathway is cofactor biosynthesis; pyridoxine 5'-phosphate biosynthesis; pyridoxine 5'-phosphate from D-erythrose 4-phosphate: step 5/5. In terms of biological role, catalyzes the complicated ring closure reaction between the two acyclic compounds 1-deoxy-D-xylulose-5-phosphate (DXP) and 3-amino-2-oxopropyl phosphate (1-amino-acetone-3-phosphate or AAP) to form pyridoxine 5'-phosphate (PNP) and inorganic phosphate. This is Pyridoxine 5'-phosphate synthase from Brucella anthropi (strain ATCC 49188 / DSM 6882 / CCUG 24695 / JCM 21032 / LMG 3331 / NBRC 15819 / NCTC 12168 / Alc 37) (Ochrobactrum anthropi).